The sequence spans 93 residues: Large ribosomal subunit protein eL42 (93 aa).

Cys11, Cys14, Cys71, and Cys74 together coordinate Zn(2+). The C4-type zinc-finger motif lies at 11 to 74 (CPYCKKHTSH…IALRLVCDEC (64 aa)).

This sequence belongs to the eukaryotic ribosomal protein eL42 family. As to quaternary structure, part of the 50S ribosomal subunit. The cofactor is Zn(2+).

In terms of biological role, binds to the 23S rRNA. This chain is Large ribosomal subunit protein eL42, found in Thermoplasma acidophilum (strain ATCC 25905 / DSM 1728 / JCM 9062 / NBRC 15155 / AMRC-C165).